Consider the following 493-residue polypeptide: Dipeptidase 3 (493 aa).

Positions 1-35 are cleaved as a signal peptide; that stretch reads MQPAGLEGPRALGLRPLGHRLSLLGVLLLVPSLWV. The segment covering 41–60 has biased composition (low complexity); it reads TPSPSSAPTTPEASNATTAP. The disordered stretch occupies residues 41–74; it reads TPSPSSAPTTPEASNATTAPGIPNDTATSGVTSD. 2 disulfides stabilise this stretch: C143-C222 and C294-C326. N331 carries an N-linked (GlcNAc...) asparagine glycan. Residue S462 is the site of GPI-anchor amidated serine attachment. The propeptide at 463–493 is removed in mature form; it reads KAPPHPLPGLMATLTSLALILWLCCSGHRAV.

Belongs to the metallo-dependent hydrolases superfamily. Peptidase M19 family. As to quaternary structure, homodimer; disulfide-linked. Interacts with TEX101; co-localized on the cell surface of spermatocytes, spermatids, and testicular spermatozoa, co-localized only in cytoplasmic droplets of caput and corpus epididymal sperm. In terms of tissue distribution, expressed in testis but not ovary.

The protein localises to the membrane. Its function is as follows. Lacks dipeptidase activity and is unable to hydrolyze cystinyl-bis-glycine. The absence of activity may be due to the inability of serine (instead of aspartate found in DPEP1/2) at position 356 to function as the acid/base catalyst and activate the nucleophilic water/hydroxide. Does not hydrolyze leukotriene D4 (LTD4) into leukotriene E4 (LTE4). Does not hydrolyze the beta-lactam antibiotic imipenem. The chain is Dipeptidase 3 (Dpep3) from Mus musculus (Mouse).